An 848-amino-acid chain; its full sequence is DNA mismatch repair protein MutS (848 aa).

610–617 (GPNMGGKS) contributes to the ATP binding site.

The protein belongs to the DNA mismatch repair MutS family.

Functionally, this protein is involved in the repair of mismatches in DNA. It is possible that it carries out the mismatch recognition step. This protein has a weak ATPase activity. The chain is DNA mismatch repair protein MutS from Francisella philomiragia subsp. philomiragia (strain ATCC 25017 / CCUG 19701 / FSC 153 / O#319-036).